The following is a 373-amino-acid chain: Glutamine synthetase (373 aa).

The residue at position 2 (Ala-2) is an N-acetylalanine. The required for glutamine-induced ubiquitination by CRL4(CRBN) and proteasomal degradation stretch occupies residues 2–25; the sequence is ATSASSHLNKGIKQMYMSLPQGEK. Lys-11 and Lys-14 each carry N6-acetyllysine. The region spanning 24 to 106 is the GS beta-grasp domain; it reads EKVQAMYIWV…VLCEVFKYNR (83 aa). At Tyr-104 the chain carries Phosphotyrosine. The GS catalytic domain occupies 113–373; it reads LRHICKRIMD…TGDEPFQYKN (261 aa). Glu-134 contributes to the ATP binding site. 4 residues coordinate Mn(2+): Glu-134, Glu-136, Glu-196, and Glu-203. Position 203-208 (203-208) interacts with ATP; the sequence is EFQIGP. 246–247 lines the L-glutamate pocket; the sequence is NW. Position 253 (His-253) interacts with Mn(2+). ATP-binding positions include 255–257, Arg-319, and Arg-324; that span reads NFS. Position 319 (Arg-319) interacts with L-glutamate. 336 to 338 is a binding site for ADP; the sequence is YFE. Glu-338 serves as a coordination point for Mn(2+). Arg-340 provides a ligand contact to L-glutamate. At Ser-343 the chain carries Phosphoserine.

Belongs to the glutamine synthetase family. As to quaternary structure, decamer; composed of two pentamers. Interacts with PALMD. Interacts with RHOJ. Interacts with BEST2; this interaction tethers a fraction of GLUL to the membrane, causing a decrease of cytosolic glutamine synthase (GS) activity and inhibits the chloride channel activity of BEST2 by affecting the gating at the aperture in the absence of intracellular glutamate. The cofactor is Mg(2+). Mn(2+) serves as cofactor. Post-translationally, acetylated by EP300/p300; acetylation is stimulated by increased glutamine levels and promotes ubiquitin-mediated proteasomal degradation. In terms of processing, palmitoylated; undergoes autopalmitoylation. Ubiquitinated by ZNRF1. Ubiquitinated by the DCX (DDB1-CUL4-X-box) E3 ubiquitin-protein ligase complex called CRL4(CRBN), leading to proteasomal degradation. As to expression, expressed in microvascular endothelial cells.

It is found in the cytoplasm. Its subcellular location is the cytosol. The protein localises to the microsome. The protein resides in the mitochondrion. It localises to the cell membrane. The catalysed reaction is L-glutamate + NH4(+) + ATP = L-glutamine + ADP + phosphate + H(+). It catalyses the reaction L-cysteinyl-[protein] + hexadecanoyl-CoA = S-hexadecanoyl-L-cysteinyl-[protein] + CoA. Its activity is regulated as follows. Glutamine synthetase activity is inhibited by methionine sulfoximine (MSO). In terms of biological role, glutamine synthetase that catalyzes the ATP-dependent conversion of glutamate and ammonia to glutamine. Its role depends on tissue localization: in the brain, it regulates the levels of toxic ammonia and converts neurotoxic glutamate to harmless glutamine, whereas in the liver, it is one of the enzymes responsible for the removal of ammonia. Plays a key role in ammonium detoxification during erythropoiesis: the glutamine synthetase activity is required to remove ammonium generated by porphobilinogen deaminase (HMBS) during heme biosynthesis to prevent ammonium accumulation and oxidative stress. Essential for proliferation of fetal skin fibroblasts. Independently of its glutamine synthetase activity, required for endothelial cell migration during vascular development. Involved in angiogenesis by regulating membrane localization and activation of the GTPase RHOJ, possibly by promoting RHOJ palmitoylation. May act as a palmitoyltransferase for RHOJ: able to autopalmitoylate and then transfer the palmitoyl group to RHOJ. Plays a role in ribosomal 40S subunit biogenesis. Through the interaction with BEST2, inhibits BEST2 channel activity by affecting the gating at the aperture in the absence of intracellular L-glutamate, but sensitizes BEST2 to intracellular L-glutamate, which promotes the opening of BEST2 and thus relieves its inhibitory effect on BEST2. This chain is Glutamine synthetase, found in Mus musculus (Mouse).